Here is a 335-residue protein sequence, read N- to C-terminus: Eukaryotic translation initiation factor 3 subunit H-A (335 aa).

The MPN domain maps to Ile-22–Leu-156. Low complexity predominate over residues Gln-254–Gln-272. A disordered region spans residues Gln-254–Glu-282.

It belongs to the eIF-3 subunit H family. In terms of assembly, component of the eukaryotic translation initiation factor 3 (eIF-3) complex, which is composed of 13 subunits: eif3a, eif3b, eif3c, eif3d, eif3e, eif3f, eif3g, eif3h, eif3i, eif3j, eif3k, eif3l and eif3m.

It localises to the cytoplasm. Functionally, component of the eukaryotic translation initiation factor 3 (eIF-3) complex, which is involved in protein synthesis of a specialized repertoire of mRNAs and, together with other initiation factors, stimulates binding of mRNA and methionyl-tRNAi to the 40S ribosome. The eIF-3 complex specifically targets and initiates translation of a subset of mRNAs involved in cell proliferation. The protein is Eukaryotic translation initiation factor 3 subunit H-A (eif3ha) of Danio rerio (Zebrafish).